We begin with the raw amino-acid sequence, 425 residues long: Glutamate-1-semialdehyde 2,1-aminomutase (425 aa).

Residue Lys264 is modified to N6-(pyridoxal phosphate)lysine.

This sequence belongs to the class-III pyridoxal-phosphate-dependent aminotransferase family. HemL subfamily. In terms of assembly, homodimer. It depends on pyridoxal 5'-phosphate as a cofactor.

It localises to the cytoplasm. It carries out the reaction (S)-4-amino-5-oxopentanoate = 5-aminolevulinate. It functions in the pathway porphyrin-containing compound metabolism; protoporphyrin-IX biosynthesis; 5-aminolevulinate from L-glutamyl-tRNA(Glu): step 2/2. The sequence is that of Glutamate-1-semialdehyde 2,1-aminomutase from Leptospira biflexa serovar Patoc (strain Patoc 1 / Ames).